The primary structure comprises 127 residues: Methylglyoxal synthase (127 aa).

One can recognise an MGS-like domain in the interval 1 to 127 (MEKKIALIAH…IKGLESLILR (127 aa)). Residues His-10, Lys-14, 36 to 39 (TGTT), and 56 to 57 (SG) each bind substrate. Asp-62 serves as the catalytic Proton donor/acceptor. Substrate is bound at residue His-89.

Belongs to the methylglyoxal synthase family.

The catalysed reaction is dihydroxyacetone phosphate = methylglyoxal + phosphate. Catalyzes the formation of methylglyoxal from dihydroxyacetone phosphate. The protein is Methylglyoxal synthase of Borreliella afzelii (strain PKo) (Borrelia afzelii).